The chain runs to 1026 residues: Exportin-T (1026 aa).

It belongs to the exportin family.

It is found in the nucleus. The protein resides in the cytoplasm. Its function is as follows. tRNA nucleus export receptor which facilitates tRNA translocation across the nuclear pore complex. Involved in pre-tRNA splicing, probably by affecting the interaction of pre-tRNA with splicing endonuclease. This Aspergillus oryzae (strain ATCC 42149 / RIB 40) (Yellow koji mold) protein is Exportin-T (los1).